Here is a 35-residue protein sequence, read N- to C-terminus: MIEPLLCGIVLGLIPVTLTGLFVAAWNQYRRGSAL.

The helical transmembrane segment at 5–25 (LLCGIVLGLIPVTLTGLFVAA) threads the bilayer.

Belongs to the PetG family. In terms of assembly, the 4 large subunits of the cytochrome b6-f complex are cytochrome b6, subunit IV (17 kDa polypeptide, PetD), cytochrome f and the Rieske protein, while the 4 small subunits are PetG, PetL, PetM and PetN. The complex functions as a dimer.

The protein localises to the plastid. The protein resides in the organellar chromatophore thylakoid membrane. Component of the cytochrome b6-f complex, which mediates electron transfer between photosystem II (PSII) and photosystem I (PSI), cyclic electron flow around PSI, and state transitions. PetG is required for either the stability or assembly of the cytochrome b6-f complex. The sequence is that of Cytochrome b6-f complex subunit 5 from Paulinella chromatophora.